A 135-amino-acid polypeptide reads, in one-letter code: MPTINQLVRKGRHSKTTKSDSPALNYAYNSMKKKMNYNPAPQMRGVATRVGTMTPKKPNSALRKYARVRLSNLIEVTAYIPGIGHNLQEHSVVLIRGGRVKDLPGVRYHIIRGALDTAGVDGRKQGRSKYGAKKG.

The segment at 1-23 (MPTINQLVRKGRHSKTTKSDSPA) is disordered. Asp-102 carries the 3-methylthioaspartic acid modification.

It belongs to the universal ribosomal protein uS12 family. Part of the 30S ribosomal subunit. Contacts proteins S8 and S17. May interact with IF1 in the 30S initiation complex.

In terms of biological role, with S4 and S5 plays an important role in translational accuracy. Functionally, interacts with and stabilizes bases of the 16S rRNA that are involved in tRNA selection in the A site and with the mRNA backbone. Located at the interface of the 30S and 50S subunits, it traverses the body of the 30S subunit contacting proteins on the other side and probably holding the rRNA structure together. The combined cluster of proteins S8, S12 and S17 appears to hold together the shoulder and platform of the 30S subunit. The protein is Small ribosomal subunit protein uS12 of Lactobacillus gasseri (strain ATCC 33323 / DSM 20243 / BCRC 14619 / CIP 102991 / JCM 1131 / KCTC 3163 / NCIMB 11718 / NCTC 13722 / AM63).